A 346-amino-acid chain; its full sequence is MLKVAIVGASGYTGVELLRILHSHPEVAVTCVTSEQSAGRPVSSVFPSLRGRCDIVLENLEPVGIAEKVDIVFTALPHKAAMEVVPTFMKMGKDVIDLSADYRIHDADTYGKWYEPHLNPELLPEAVYGIPELRRAEIAEASLIANPGCYPTSVILGLAPLLKGKVIDPRSIIVDAASGTSGAGRGAKVDNLYCEVNEGFRAYGVGGVHRHIPEIEQELSLLAGSPLNITFTPHLVPMDRGILSTIYSQTAGSVKAADLIALYEAFYDGEPFVRVLPEGVLPSTAHVRGSNFCDIGITVDQRTGRVIVISAIDNLVKGASGQAVQNMNLMCGLPETLGLDLLPVFP.

C149 is a catalytic residue.

The protein belongs to the NAGSA dehydrogenase family. Type 1 subfamily.

It is found in the cytoplasm. It carries out the reaction N-acetyl-L-glutamate 5-semialdehyde + phosphate + NADP(+) = N-acetyl-L-glutamyl 5-phosphate + NADPH + H(+). The protein operates within amino-acid biosynthesis; L-arginine biosynthesis; N(2)-acetyl-L-ornithine from L-glutamate: step 3/4. Catalyzes the NADPH-dependent reduction of N-acetyl-5-glutamyl phosphate to yield N-acetyl-L-glutamate 5-semialdehyde. The sequence is that of N-acetyl-gamma-glutamyl-phosphate reductase from Geobacter sp. (strain M21).